We begin with the raw amino-acid sequence, 261 residues long: 14-3-3-like protein A (261 aa).

Belongs to the 14-3-3 family.

This is 14-3-3-like protein A from Vicia faba (Broad bean).